Consider the following 273-residue polypeptide: Anthocyanin regulatory C1 protein (273 aa).

2 consecutive HTH myb-type domains span residues 9–65 and 66–116; these read KEGV…RPNI and RRGN…GRRA. DNA-binding regions (H-T-H motif) lie at residues 37–61 and 89–112; these read WREV…LNYL and WSLI…NSTL. Disordered stretches follow at residues 137–164 and 196–220; these read ATPA…SAGT and AGET…SDDC. Gly residues predominate over residues 204 to 214; it reads AGGGGGGGGEA.

It localises to the nucleus. Its function is as follows. Controls the expression of genes involved in anthocyanin biosynthesis. Regulates the expression of at least 3 structural genes: chalcone synthase, dihydroflavonol reductase and flavonol O(3) glucosyltransferase. C1 acts as a trans-acting factor. The protein is Anthocyanin regulatory C1 protein (C1) of Zea mays (Maize).